Here is a 260-residue protein sequence, read N- to C-terminus: Hydroxyethylthiazole kinase 1 (260 aa).

Residue M39 participates in substrate binding. ATP-binding residues include R115 and T160. Residue G187 coordinates substrate.

Belongs to the Thz kinase family. Requires Mg(2+) as cofactor.

It catalyses the reaction 5-(2-hydroxyethyl)-4-methylthiazole + ATP = 4-methyl-5-(2-phosphooxyethyl)-thiazole + ADP + H(+). The protein operates within cofactor biosynthesis; thiamine diphosphate biosynthesis; 4-methyl-5-(2-phosphoethyl)-thiazole from 5-(2-hydroxyethyl)-4-methylthiazole: step 1/1. Functionally, catalyzes the phosphorylation of the hydroxyl group of 4-methyl-5-beta-hydroxyethylthiazole (THZ). This Streptococcus pneumoniae (strain Taiwan19F-14) protein is Hydroxyethylthiazole kinase 1.